The chain runs to 216 residues: Superoxide dismutase [Cu-Zn] 2, chloroplastic (216 aa).

The N-terminal 62 residues, 1 to 62 (MAATNTILAF…APSKALTVVS (62 aa)), are a transit peptide targeting the chloroplast. The Cu cation site is built by H108, H110, and H125. C119 and C208 are disulfide-bonded. Zn(2+)-binding residues include H125, H133, H142, and D145. H182 serves as a coordination point for Cu cation.

This sequence belongs to the Cu-Zn superoxide dismutase family. In terms of assembly, homotetramer. Cu cation is required as a cofactor. The cofactor is Zn(2+). In terms of tissue distribution, expressed in leaves (at protein level). The spatial localization is regulated by miR398-mediated silencing. Mostly present in flowers, old rosette leaves and inflorescence, and, to a lower extent, in cauline leaves, stems and roots.

Its subcellular location is the plastid. The protein localises to the chloroplast. It catalyses the reaction 2 superoxide + 2 H(+) = H2O2 + O2. Functionally, destroys radicals which are normally produced within the cells and which are toxic to biological systems. Mediates tolerance to stress, including photo-oxidative stress. This chain is Superoxide dismutase [Cu-Zn] 2, chloroplastic (CSD2), found in Arabidopsis thaliana (Mouse-ear cress).